Consider the following 436-residue polypeptide: Trigger factor (436 aa).

The PPIase FKBP-type domain occupies 163–248 (GDRVVLDFAG…VKEVAEGVLP (86 aa)).

The protein belongs to the FKBP-type PPIase family. Tig subfamily.

It is found in the cytoplasm. It catalyses the reaction [protein]-peptidylproline (omega=180) = [protein]-peptidylproline (omega=0). Its function is as follows. Involved in protein export. Acts as a chaperone by maintaining the newly synthesized protein in an open conformation. Functions as a peptidyl-prolyl cis-trans isomerase. The polypeptide is Trigger factor (Bordetella parapertussis (strain 12822 / ATCC BAA-587 / NCTC 13253)).